An 88-amino-acid chain; its full sequence is HEMRFVQRVRCWEYRQQPSIVRLVRPTRPDKARRLGYKAKQGFVVYRVRVRRGGRKRPVPKVLCMVNPQTRELLNSSSRGATVLLLRS.

It belongs to the eukaryotic ribosomal protein eL15 family.

The chain is Large ribosomal subunit protein eL15 (RPL15) from Brassica napus (Rape).